Here is a 2167-residue protein sequence, read N- to C-terminus: Glutamate synthase 1 [NADH], chloroplastic (2167 aa).

The interval 1-31 is disordered; that stretch reads MSAAQGMAYKLRTDAAPTGAGRRARRSHSSV. A chloroplast-targeting transit peptide spans 1 to 36; sequence MSAAQGMAYKLRTDAAPTGAGRRARRSHSSVAAPYR. C100 serves as the catalytic Nucleophile. The 405-residue stretch at 100-504 folds into the Glutamine amidotransferase type-2 domain; it reads CGVGFVAELS…PGMMLLVDFE (405 aa). Residues 1022–1042 form a disordered region; sequence KSNTGEGGEQPSRMEPLANGS. Residue 1192 to 1249 coordinates FMN; it reads LAETHQTLVANGLRGRAILQTDGQLKTGKDVAVACLLGAEEFGFSTAPLITLGCIMMR. 3 residues coordinate [3Fe-4S] cluster: C1245, C1251, and C1256. 1956–1970 contacts NAD(+); it reads GGGDTGTDCIGTSIR.

The protein belongs to the glutamate synthase family. As to quaternary structure, monomer. It depends on [3Fe-4S] cluster as a cofactor. FAD serves as cofactor. FMN is required as a cofactor. As to expression, highly expressed in roots.

It is found in the plastid. The protein localises to the chloroplast. It catalyses the reaction 2 L-glutamate + NAD(+) = L-glutamine + 2-oxoglutarate + NADH + H(+). Its pathway is amino-acid biosynthesis; L-glutamate biosynthesis via GLT pathway; L-glutamate from 2-oxoglutarate and L-glutamine (NAD(+) route): step 1/1. The protein operates within energy metabolism; nitrogen metabolism. Involved in glutamate biosynthesis and plays a major role in the primary ammonium ions assimilation in seedling roots. May be involved in the reutilization of glutamine in developing organs. Plays a role in the development of tillers. This chain is Glutamate synthase 1 [NADH], chloroplastic, found in Oryza sativa subsp. japonica (Rice).